The sequence spans 294 residues: ATP synthase gamma chain (294 aa).

This sequence belongs to the ATPase gamma chain family. F-type ATPases have 2 components, CF(1) - the catalytic core - and CF(0) - the membrane proton channel. CF(1) has five subunits: alpha(3), beta(3), gamma(1), delta(1), epsilon(1). CF(0) has three main subunits: a, b and c.

It localises to the cell inner membrane. Functionally, produces ATP from ADP in the presence of a proton gradient across the membrane. The gamma chain is believed to be important in regulating ATPase activity and the flow of protons through the CF(0) complex. The sequence is that of ATP synthase gamma chain from Paraburkholderia xenovorans (strain LB400).